A 1368-amino-acid polypeptide reads, in one-letter code: MGEKAIDEDKVEAMKSSKTSLVFAINGQRFELELSSIDPSTTLVDFLRNKTPFKSVKLGCGEGGCGACVVLLSKYDPLLEKVDEFTISSCLTLLCSIDGCSITTSDGLGNSRVGFHAVHERIAGFHATQCGFCTPGMSVSMFSALLNADKSHPPPRSGFSNLTAVEAEKAVSGNLCRCTGYRPLVDACKSFAADVDIEDLGFNAFCKKGENRDEVLRRLPCYDHTSSHVCTFPEFLKKEIKNDMSLHSRKYRWSSPVSVSELQGLLEVENGLSVKLVAGNTSTGYYKEEKERKYERFIDIRKIPEFTMVRSDEKGVELGACVTISKAIEVLREEKNVSVLAKIATHMEKIANRFVRNTGTIGGNIMMAQRKQFPSDLATILVAAQATVKIMTSSSSQEQFTLEEFLQQPPLDAKSLLLSLEIPSWHSAKKNGSSEDSILLFETYRAAPRPLGNALAFLNAAFSAEVTEALDGIVVNDCQLVFGAYGTKHAHRAKKVEEFLTGKVISDEVLMEAISLLKDEIVPDKGTSNPGYRSSLAVTFLFEFFGSLTKKNAKTTNGWLNGGCKEIGFDQNVESLKPEAMLSSAQQIVENQEHSPVGKGITKAGACLQASGEAVYVDDIPAPENCLYGAFIYSTMPLARIKGIRFKQNRVPEGVLGIITYKDIPKGGQNIGTNGFFTSDLLFAEEVTHCAGQIIAFLVADSQKHADIAANLVVIDYDTKDLKPPILSLEEAVENFSLFEVPPPLRGYPVGDITKGMDEAEHKILGSKISFGSQYFFYMETQTALAVPDEDNCMVVYSSTQTPEFVHQTIAGCLGVPENNVRVITRRVGGGFGGKAVKSMPVAAACALAASKMQRPVRTYVNRKTDMITTGGRHPMKVTYSVGFKSNGKITALDVEVLLDAGLTEDISPLMPKGIQGALMKYDWGALSFNVKVCKTNTVSRTALRAPGDVQGSYIGEAIIEKVASYLSVDVDEIRKVNLHTYESLRLFHSAKAGEFSEYTLPLLWDRIDEFSGFNKRRKVVEEFNASNKWRKRGISRVPAVYAVNMRSTPGRVSVLGDGSIVVEVQGIEIGQGLWTKVKQMAAYSLGLIQCGTTSDELLKKIRVIQSDTLSMVQGSMTAGSTTSEASSEAVRICCDGLVERLLPVKTALVEQTGGPVTWDSLISQAYQQSINMSVSSKYMPDSTGEYLNYGIAASEVEVNVLTGETTILRTDIIYDCGKSLNPAVDLGQIEGAFVQGLGFFMLEEFLMNSDGLVVTDSTWTYKIPTVDTIPRQFNVEILNSGQHKNRVLSSKASGEPPLLLAASVHCAVRAAVKEARKQILSWNSNKQGTDMYFELPVPATMPIVKEFCGLDVVEKYLEWKIQQRKNV.

The region spanning Thr19–Leu108 is the 2Fe-2S ferredoxin-type domain. The [2Fe-2S] cluster site is built by Cys60, Cys65, and Cys68. Positions Leu246–Ser427 constitute an FAD-binding PCMH-type domain.

This sequence belongs to the xanthine dehydrogenase family. Aldehyde oxidases (AO) are homodimers and heterodimers of AO subunits. AO-alpha is an AAO1 homodimer; AO-beta is an AAO1-AAO2 heterodimer. [2Fe-2S] cluster serves as cofactor. Requires FAD as cofactor. It depends on Mo-molybdopterin as a cofactor. As to expression, predominantly expressed in roots, seedlings, mature siliques and seeds, and to lower extent in stems and rosettes. In seedlings, mostly expressed in lower part of hypocotyls and roots.

The protein localises to the cytoplasm. It carries out the reaction indole-3-acetaldehyde + O2 + H2O = (indol-3-yl)acetate + H2O2 + H(+). Its activity is regulated as follows. Strongly inhibited by iodoacetate and potassium cyanide (KCN). Weakly inhibited by 2-mercaptoethanol, dithiothreitol (DTT), menadione, estradiol, 4'-(9-acridinylamino)methanesulfon-m-anisidine (mAMSA), allopurinol and tritonX-100. Not affected by p-chloromercuribenzoate. Functionally, in higher plants aldehyde oxidases (AO) appear to be homo- and heterodimeric assemblies of AO subunits with probably different physiological functions. AO-alpha may be involved in the biosynthesis of auxin, and in biosynthesis of abscisic acid (ABA) in seeds. In vitro, AO-alpha uses heptaldehyde, protocatechualdehyde, benzaldehyde, indole-3-aldehyde (IAld), indole-3-acetaldehyde (IAAld), cinnamaldehyde and citral as substrates; AO-beta uses IAAld, IAld and naphtaldehyde as substrates. The polypeptide is Indole-3-acetaldehyde oxidase (AAO1) (Arabidopsis thaliana (Mouse-ear cress)).